The sequence spans 430 residues: MPYIVDVYAREVLDSRGNPTVEVEVYTETGAFGRALVPSGASTGEYEAVELRDGDKDRYLGKGVLTAVNNVNEIISPELLGFDVTEQNAIDQLLIELDGTENKGKLGANAILGVSMACARAAADFLQIPLYQYLGGFNSKTLPVPMMNIVNGGEHADNNVDIQEFMIMPVGAPNFREALRMGAQIFHSLKSVLSAKGMNTAVGDEGGFAPNLGSNEEALQTIVEAIEKAGFKPGEEVKLAMDAASSEFYNKEDGKYHLSGEGVVKTSAEMVDWYEEMVSKYPIISIEDGLDENDWEGHKLLTERLGKKVQLVGDDLFVTNTKKLAEGIKNGVGNSILIKVNQIGTLTETFDAIEMAKRAGYTAVISHRSGETEDSTIADIAVATNAGQIKTGAPSRTDRVAKYNQLLRIEDQLAETAQYHGINSFYNLNK.

Glutamine 163 lines the (2R)-2-phosphoglycerate pocket. The active-site Proton donor is the glutamate 205. Mg(2+)-binding residues include aspartate 242, glutamate 287, and aspartate 314. 4 residues coordinate (2R)-2-phosphoglycerate: lysine 339, arginine 368, serine 369, and lysine 390. Catalysis depends on lysine 339, which acts as the Proton acceptor.

It belongs to the enolase family. Mg(2+) is required as a cofactor.

The protein localises to the cytoplasm. The protein resides in the secreted. It is found in the cell surface. It catalyses the reaction (2R)-2-phosphoglycerate = phosphoenolpyruvate + H2O. It functions in the pathway carbohydrate degradation; glycolysis; pyruvate from D-glyceraldehyde 3-phosphate: step 4/5. In terms of biological role, catalyzes the reversible conversion of 2-phosphoglycerate (2-PG) into phosphoenolpyruvate (PEP). It is essential for the degradation of carbohydrates via glycolysis. The polypeptide is Enolase (Bacillus velezensis (strain DSM 23117 / BGSC 10A6 / LMG 26770 / FZB42) (Bacillus amyloliquefaciens subsp. plantarum)).